We begin with the raw amino-acid sequence, 482 residues long: tRNA sulfurtransferase (482 aa).

Positions 61–165 (LVIRDALTRI…DDRLLLIKGR (105 aa)) constitute a THUMP domain. Residues 183-184 (LI), lysine 265, glycine 287, and glutamine 296 each bind ATP. A disulfide bond links cysteine 344 and cysteine 456. The 79-residue stretch at 404-482 (FGPNDVILDI…GFANVKVYRP (79 aa)) folds into the Rhodanese domain. Residue cysteine 456 is the Cysteine persulfide intermediate of the active site.

This sequence belongs to the ThiI family.

The protein resides in the cytoplasm. The catalysed reaction is [ThiI sulfur-carrier protein]-S-sulfanyl-L-cysteine + a uridine in tRNA + 2 reduced [2Fe-2S]-[ferredoxin] + ATP + H(+) = [ThiI sulfur-carrier protein]-L-cysteine + a 4-thiouridine in tRNA + 2 oxidized [2Fe-2S]-[ferredoxin] + AMP + diphosphate. It catalyses the reaction [ThiS sulfur-carrier protein]-C-terminal Gly-Gly-AMP + S-sulfanyl-L-cysteinyl-[cysteine desulfurase] + AH2 = [ThiS sulfur-carrier protein]-C-terminal-Gly-aminoethanethioate + L-cysteinyl-[cysteine desulfurase] + A + AMP + 2 H(+). It functions in the pathway cofactor biosynthesis; thiamine diphosphate biosynthesis. Functionally, catalyzes the ATP-dependent transfer of a sulfur to tRNA to produce 4-thiouridine in position 8 of tRNAs, which functions as a near-UV photosensor. Also catalyzes the transfer of sulfur to the sulfur carrier protein ThiS, forming ThiS-thiocarboxylate. This is a step in the synthesis of thiazole, in the thiamine biosynthesis pathway. The sulfur is donated as persulfide by IscS. The chain is tRNA sulfurtransferase from Salmonella typhimurium (strain LT2 / SGSC1412 / ATCC 700720).